A 350-amino-acid polypeptide reads, in one-letter code: Enoyl-[acyl-carrier-protein] reductase, mitochondrial (350 aa).

A mitochondrion-targeting transit peptide spans 1-12; the sequence is MWLGLRLFHRPF. Tyr68 functions as the Proton donor in the catalytic mechanism. NADP(+)-binding positions include Asn141, 167-170, 190-192, 259-262, 284-286, and Lys345; these read NSGV, RDR, YGGM, and FWV.

Belongs to the zinc-containing alcohol dehydrogenase family. Quinone oxidoreductase subfamily. In terms of assembly, homodimer. As to expression, expressed in the developing pronephros.

The protein resides in the mitochondrion. It catalyses the reaction a 2,3-saturated acyl-[ACP] + NADP(+) = a (2E)-enoyl-[ACP] + NADPH + H(+). In terms of biological role, catalyzes the NADPH-dependent reduction of trans-2-enoyl thioesters in mitochondrial fatty acid synthesis (fatty acid synthesis type II). Fatty acid chain elongation in mitochondria uses acyl carrier protein (ACP) as an acyl group carrier, but the enzyme accepts both ACP and CoA thioesters as substrates in vitro. May provide the octanoyl chain used for lipoic acid biosynthesis, regulating protein lipoylation and mitochondrial respiratory activity. Involved in iron homeostasis; affecting Fe-S cluster assembly and ceramide metabolism. Required for proper morphology and bioenergetic functions of mitochondria. Required for maintenance of neurons. Functions in pronephros development, regulating late differentiation of all pronephric tubule segments. This chain is Enoyl-[acyl-carrier-protein] reductase, mitochondrial (mecr), found in Xenopus tropicalis (Western clawed frog).